Consider the following 368-residue polypeptide: tRNA-specific 2-thiouridylase MnmA (368 aa).

ATP-binding positions include 11–18 (GMSGGVDS) and Met-37. The segment at 97–99 (NPD) is interaction with target base in tRNA. Cys-102 serves as the catalytic Nucleophile. Cys-102 and Cys-199 form a disulfide bridge. Residue Gly-127 participates in ATP binding. The tract at residues 149–151 (KDQ) is interaction with tRNA. Cys-199 (cysteine persulfide intermediate) is an active-site residue. Residues 311 to 312 (RY) form an interaction with tRNA region.

This sequence belongs to the MnmA/TRMU family. Interacts with TusE.

Its subcellular location is the cytoplasm. It catalyses the reaction S-sulfanyl-L-cysteinyl-[protein] + uridine(34) in tRNA + AH2 + ATP = 2-thiouridine(34) in tRNA + L-cysteinyl-[protein] + A + AMP + diphosphate + H(+). Catalyzes the 2-thiolation of uridine at the wobble position (U34) of tRNA(Lys), tRNA(Glu) and tRNA(Gln), leading to the formation of s(2)U34, the first step of tRNA-mnm(5)s(2)U34 synthesis. Sulfur is provided by IscS, via a sulfur-relay system. Binds ATP and its substrate tRNAs. The protein is tRNA-specific 2-thiouridylase MnmA of Salmonella arizonae (strain ATCC BAA-731 / CDC346-86 / RSK2980).